Reading from the N-terminus, the 131-residue chain is Profilin-3 (131 aa).

The protein belongs to the profilin family. In terms of assembly, occurs in many kinds of cells as a complex with monomeric actin in a 1:1 ratio.

Its subcellular location is the cytoplasm. The protein resides in the cytoskeleton. In terms of biological role, binds to actin and affects the structure of the cytoskeleton. At high concentrations, profilin prevents the polymerization of actin, whereas it enhances it at low concentrations. By binding to PIP2, it inhibits the formation of IP3 and DG. The polypeptide is Profilin-3 (Lilium longiflorum (Trumpet lily)).